The primary structure comprises 687 residues: Ferric vulnibactin receptor VuuA (687 aa).

The first 37 residues, M1–A37, serve as a signal peptide directing secretion. Positions T63 to N185 constitute a TBDR plug domain. One can recognise a TBDR beta-barrel domain in the interval H190–F687. Positions E670 to F687 match the TonB C-terminal box motif.

It belongs to the TonB-dependent receptor family.

The protein localises to the cell outer membrane. Its function is as follows. Involved in the uptake of iron in complex with vulnibactin, a catecholate siderophore synthesized by V.vulnificus. Binds and transports ferric vulnibactin across the outer membrane. The energy source is provided by the inner membrane TonB system. This is Ferric vulnibactin receptor VuuA from Vibrio vulnificus.